A 715-amino-acid chain; its full sequence is Lactococcin-A transport/processing ATP-binding protein LcnC (715 aa).

The region spanning 11-138 (QVDEMDCGCA…SEWTGISLFL (128 aa)) is the Peptidase C39 domain. Residue cysteine 17 is part of the active site. 6 helical membrane passes run 167–187 (VILN…LGSY), 197–217 (IPNA…LTYI), 237–257 (LAID…MSFF), 282–302 (TILS…ILGL), 307–327 (LFLL…IFTP), and 396–416 (AIIQ…LVIS). The region spanning 168–450 (ILNIVIASFI…IINLQTKLQK (283 aa)) is the ABC transmembrane type-1 domain. The region spanning 482–715 (LNMSDISYQY…NGFYEQLYHN (234 aa)) is the ABC transporter domain. Residue 515-522 (GMSGSGKS) participates in ATP binding.

The protein belongs to the ABC transporter superfamily. Bacteriocin (lactococcin) exporter (TC 3.A.1.112.3) family.

It localises to the cell membrane. In terms of biological role, involved in the export process of the bacteriocin lactococcin A. The chain is Lactococcin-A transport/processing ATP-binding protein LcnC (lcnC) from Lactococcus lactis subsp. lactis (Streptococcus lactis).